A 41-amino-acid polypeptide reads, in one-letter code: uncharacterized protein (41 aa).

Positions 1-23 (MNFLMRAIFSLLLLFTLSIPVIS) are cleaved as a signal peptide.

This is an uncharacterized protein from Escherichia coli (strain K12).